Consider the following 88-residue polypeptide: Small ribosomal subunit protein uS15 (88 aa).

This sequence belongs to the universal ribosomal protein uS15 family. Part of the 30S ribosomal subunit. Forms a bridge to the 50S subunit in the 70S ribosome, contacting the 23S rRNA.

Functionally, one of the primary rRNA binding proteins, it binds directly to 16S rRNA where it helps nucleate assembly of the platform of the 30S subunit by binding and bridging several RNA helices of the 16S rRNA. Forms an intersubunit bridge (bridge B4) with the 23S rRNA of the 50S subunit in the ribosome. In Hydrogenovibrio crunogenus (strain DSM 25203 / XCL-2) (Thiomicrospira crunogena), this protein is Small ribosomal subunit protein uS15.